The primary structure comprises 152 residues: Ribosome maturation factor RimP (152 aa).

It belongs to the RimP family.

The protein resides in the cytoplasm. Its function is as follows. Required for maturation of 30S ribosomal subunits. The protein is Ribosome maturation factor RimP of Sodalis glossinidius (strain morsitans).